Here is a 255-residue protein sequence, read N- to C-terminus: Microfibril-associated glycoprotein 4 (255 aa).

A signal peptide spans 1-21; the sequence is MKALLALPLLLLLSTPPCAPQ. The Cell attachment site motif lies at 26–28; sequence RGD. The region spanning 32–255 is the Fibrinogen C-terminal domain; sequence RFCLQQPLDC…KRTEMKIRRA (224 aa). 2 N-linked (GlcNAc...) asparagine glycosylation sites follow: asparagine 87 and asparagine 137.

As to quaternary structure, homodimer. Can also form higher oligomers. Interacts with FBN1, FBN2 and LOX. Interacts with COL1A1 in a Ca (2+)-dependent manner. Interacts with ELN in a Ca (2+)-dependent manner; this interaction promotes ELN self-assembly.

The protein localises to the secreted. It localises to the extracellular space. The protein resides in the extracellular matrix. Could be involved in calcium-dependent cell adhesion or intercellular interactions. May contribute to the elastic fiber assembly and/or maintenance. The sequence is that of Microfibril-associated glycoprotein 4 (MFAP4) from Homo sapiens (Human).